The primary structure comprises 186 residues: Ribosome rescue factor SmrB (186 aa).

Positions 99–174 (IDLHGLTQHQ…SDAAIIVIIE (76 aa)) constitute a Smr domain.

It belongs to the SmrB family. As to quaternary structure, associates with collided ribosomes, but not with correctly translating polysomes.

Acts as a ribosome collision sensor. Detects stalled/collided disomes (pairs of ribosomes where the leading ribosome is stalled and a second ribosome has collided with it) and endonucleolytically cleaves mRNA at the 5' boundary of the stalled ribosome. Stalled/collided disomes form a new interface (primarily via the 30S subunits) that binds SmrB. Cleaved mRNA becomes available for tmRNA ligation, leading to ribosomal subunit dissociation and rescue of stalled ribosomes. The polypeptide is Ribosome rescue factor SmrB (Buchnera aphidicola subsp. Acyrthosiphon pisum (strain Tuc7)).